A 467-amino-acid chain; its full sequence is Glycogen synthase (467 aa).

ADP-alpha-D-glucose is bound at residue lysine 16.

The protein belongs to the glycosyltransferase 1 family. Bacterial/plant glycogen synthase subfamily.

The enzyme catalyses [(1-&gt;4)-alpha-D-glucosyl](n) + ADP-alpha-D-glucose = [(1-&gt;4)-alpha-D-glucosyl](n+1) + ADP + H(+). Its pathway is glycan biosynthesis; glycogen biosynthesis. Synthesizes alpha-1,4-glucan chains using ADP-glucose. The sequence is that of Glycogen synthase from Paracoccus denitrificans (strain Pd 1222).